The chain runs to 60 residues: Mastoparan-D (60 aa).

A signal peptide spans 1–27 (MKNTILILFTAFIALLGFFGMSAEALA). AXPX repeat units lie at residues 27–30 (ADPI), 31–34 (ADPV), 35–38 (AGPN), and 41–44 (ADPE). Residues 28–45 (DPIADPVAGPNPEADPEA) constitute a propeptide that is removed on maturation. The residue at position 59 (Leu-59) is a Leucine amide.

The protein belongs to the MCD family. Mastoparan subfamily. Expressed by the venom gland.

It localises to the secreted. Its subcellular location is the target cell membrane. Its function is as follows. Antimicrobial and mast cell degranulating peptide. Has broad spectrum antibacterial activity against both Gram-positive and Gram-negative bacteria (S.aureus MIC=24-32 ug/ml, S.xylosus MIC=2 ug/ml, S.alactolyticus MIC=16 ug/ml, C.koseri MIC=4 ug/ml, E.coli MIC=8 ug/ml, K.pneumoniae MIC=32 ug/ml, P.aerugiosa MIC=128 ug/ml, S.choleraesuis MIC=16 ug/ml, S.typhimurium MIC=32 ug/ml, V.parahamelytics MIC=32 ug/ml). Affects membrane permeability of E.coli. Shows hemolytic activities on sheep, chicken and human erythrocytes. Its mast cell degranulation activity may be related to the activation of G-protein coupled receptors in mast cells as well as interaction with other proteins located in cell endosomal membranes in the mast cells. This is Mastoparan-D from Vespa ducalis (Black-tailed hornet).